Here is a 480-residue protein sequence, read N- to C-terminus: Trigger factor (480 aa).

In terms of domain architecture, PPIase FKBP-type spans 161 to 249 (GDRLLITGKF…VVEVLKEQLP (89 aa)). A disordered region spans residues 426–480 (TEEPVEKEAEEKNEEFAIDHEVLPTKDHDAIPAAKYDDNTPKGAETEDKQEKDKD). Positions 429-480 (PVEKEAEEKNEEFAIDHEVLPTKDHDAIPAAKYDDNTPKGAETEDKQEKDKD) are enriched in basic and acidic residues.

The protein belongs to the FKBP-type PPIase family. Tig subfamily.

The protein localises to the cytoplasm. It carries out the reaction [protein]-peptidylproline (omega=180) = [protein]-peptidylproline (omega=0). Functionally, involved in protein export. Acts as a chaperone by maintaining the newly synthesized protein in an open conformation. Functions as a peptidyl-prolyl cis-trans isomerase. The chain is Trigger factor from Rhodopirellula baltica (strain DSM 10527 / NCIMB 13988 / SH1).